The following is a 289-amino-acid chain: Acetylglutamate kinase (289 aa).

Substrate-binding positions include 60–61 (GG), Arg-82, and Asn-186.

It belongs to the acetylglutamate kinase family. ArgB subfamily.

It is found in the cytoplasm. The catalysed reaction is N-acetyl-L-glutamate + ATP = N-acetyl-L-glutamyl 5-phosphate + ADP. The protein operates within amino-acid biosynthesis; L-arginine biosynthesis; N(2)-acetyl-L-ornithine from L-glutamate: step 2/4. In terms of biological role, catalyzes the ATP-dependent phosphorylation of N-acetyl-L-glutamate. The sequence is that of Acetylglutamate kinase from Methanoculleus marisnigri (strain ATCC 35101 / DSM 1498 / JR1).